A 146-amino-acid chain; its full sequence is Transcription initiation factor TFIID subunit 10b (146 aa).

The tract at residues 16 to 43 (GASSHGQSSGGGGGGDRDRTTPSSHLSD) is disordered.

The protein belongs to the TAF10 family. In terms of assembly, belongs to the TFIID complex which is composed of TATA binding protein (Tbp) and a number of TBP-associated factors (TAFs). The N-terminus interacts with the histone fold of Taf8. As to expression, at embryonic stage 9, expression is seen in the mesodermal layer and midgut primordia. The mesoderm-specific expression persists in later stages of development and at its highest level is detected in midgut, hindgut, and differentiating somatic muscle fibers. Coexpressed with Taf10 in the lateral epidermis and anal plate.

It is found in the cytoplasm. The protein localises to the nucleus. Its function is as follows. TFIID is a multimeric protein complex that plays a central role in mediating promoter responses to various activators and repressors. This Drosophila melanogaster (Fruit fly) protein is Transcription initiation factor TFIID subunit 10b.